A 146-amino-acid polypeptide reads, in one-letter code: Cytochrome c-556 (146 aa).

Residues 1-24 (MCMKLKTITAAMLFGCLCAGAVYA) form the signal peptide. Heme c is bound by residues methionine 35, cysteine 135, cysteine 138, and histidine 139.

As to quaternary structure, monomer. Post-translationally, binds 1 heme c group covalently per subunit.

In terms of biological role, low-spin monoheme cytochrome c. The protein is Cytochrome c-556 of Agrobacterium fabrum (strain C58 / ATCC 33970) (Agrobacterium tumefaciens (strain C58)).